Reading from the N-terminus, the 446-residue chain is 3',5'-cyclic-AMP phosphodiesterase 7B (446 aa).

Residues 97 to 420 form the PDEase domain; the sequence is LDEDYLGQAR…AQWKSLLSNQ (324 aa). The active-site Proton donor is His-173. Residues His-177, His-213, Asp-214, and Asp-323 each contribute to the a divalent metal cation site. The tract at residues 422 to 446 is disordered; sequence RRRGSGQDLAGPAPETLEQTEGATP. Position 426 is a phosphoserine (Ser-426). Position 445 is a phosphothreonine (Thr-445).

Belongs to the cyclic nucleotide phosphodiesterase family. PDE7 subfamily. Requires a divalent metal cation as cofactor. Highly expressed in brain.

It carries out the reaction 3',5'-cyclic AMP + H2O = AMP + H(+). It participates in purine metabolism; 3',5'-cyclic AMP degradation; AMP from 3',5'-cyclic AMP: step 1/1. Inhibited by dipyridamole, IBMX and SCH 51866. Insensitive to zaprinast, rolipram, and milrinone. Its function is as follows. Hydrolyzes the second messenger cAMP, which is a key regulator of many important physiological processes. May be involved in the control of cAMP-mediated neural activity and cAMP metabolism in the brain. This chain is 3',5'-cyclic-AMP phosphodiesterase 7B, found in Mus musculus (Mouse).